Reading from the N-terminus, the 23-residue chain is Dahlein-4.1 (23 aa).

As to expression, expressed by the skin dorsal glands.

The protein resides in the secreted. In terms of biological role, has no antimicrobial activity. The sequence is that of Dahlein-4.1 from Ranoidea dahlii (Dahl's aquatic frog).